Consider the following 246-residue polypeptide: Caffeoyl-CoA O-methyltransferase 1 (246 aa).

Lys21 is a binding site for substrate. S-adenosyl-L-methionine contacts are provided by residues Thr63, Glu85, Gly87–Val88, Ser93, Asp111, and Ala140. Asp162 contacts substrate. Asp162 contacts a divalent metal cation. Asp164 is a binding site for S-adenosyl-L-methionine. Residues Asp188 and Asn189 each coordinate a divalent metal cation. Asn193 is a binding site for substrate.

Belongs to the class I-like SAM-binding methyltransferase superfamily. Cation-dependent O-methyltransferase family. CCoAMT subfamily. The cofactor is a divalent metal cation.

It carries out the reaction (E)-caffeoyl-CoA + S-adenosyl-L-methionine = (E)-feruloyl-CoA + S-adenosyl-L-homocysteine + H(+). It functions in the pathway aromatic compound metabolism; phenylpropanoid biosynthesis. Its function is as follows. Methylates caffeoyl-CoA to feruloyl-CoA and 5-hydroxyferuloyl-CoA to sinapoyl-CoA. Plays a role in the synthesis of feruloylated polysaccharides. Involved in the reinforcement of the plant cell wall. Also involved in the responding to wounding or pathogen challenge by the increased formation of cell wall-bound ferulic acid polymers. The protein is Caffeoyl-CoA O-methyltransferase 1 (CCOMT) of Eucalyptus globulus (Tasmanian blue gum).